Reading from the N-terminus, the 175-residue chain is Adenine phosphoribosyltransferase (175 aa).

This sequence belongs to the purine/pyrimidine phosphoribosyltransferase family. Homodimer.

It is found in the cytoplasm. The catalysed reaction is AMP + diphosphate = 5-phospho-alpha-D-ribose 1-diphosphate + adenine. It participates in purine metabolism; AMP biosynthesis via salvage pathway; AMP from adenine: step 1/1. In terms of biological role, catalyzes a salvage reaction resulting in the formation of AMP, that is energically less costly than de novo synthesis. The sequence is that of Adenine phosphoribosyltransferase from Lactobacillus delbrueckii subsp. bulgaricus (strain ATCC 11842 / DSM 20081 / BCRC 10696 / JCM 1002 / NBRC 13953 / NCIMB 11778 / NCTC 12712 / WDCM 00102 / Lb 14).